Consider the following 289-residue polypeptide: Arabinogalactan O-methyltransferase 1 (289 aa).

Residues Ile-12–Ile-32 traverse the membrane as a helical segment.

Belongs to the methyltransferase superfamily. As to quaternary structure, binds to the translation initiation factors TIF3E1.

The protein resides in the golgi apparatus membrane. Functionally, involved in the methylation of glucuronic acid of different plant cell wall component, but mainly on side chains of arabinogalactans. In Arabidopsis thaliana (Mouse-ear cress), this protein is Arabinogalactan O-methyltransferase 1 (AGM1).